A 352-amino-acid chain; its full sequence is Carbohydrate sulfotransferase 11 (352 aa).

Residues 1-16 (MKPALLEVMRMNRICR) lie on the Cytoplasmic side of the membrane. The chain crosses the membrane as a helical; Signal-anchor for type II membrane protein span at residues 17–37 (MVLATCFGSFILVIFYFQSML). The Lumenal segment spans residues 38-352 (HPVMRRNPFG…YSVPNYLKLD (315 aa)). Residues 124 to 130 (PKVACTN) and 186 to 194 (REPFERLVS) each bind 3'-phosphoadenylyl sulfate. Asn-205, Asn-223, Asn-321, and Asn-342 each carry an N-linked (GlcNAc...) asparagine glycan.

It belongs to the sulfotransferase 2 family. In terms of processing, N-glycosylated; required for activity and stability. As to expression, predominantly expressed in brain and kidney. Also expressed at weaker level in heart, spleen and lung. Expressed in developing chondrocytes.

The protein localises to the golgi apparatus membrane. The enzyme catalyses chondroitin beta-D-glucuronate + n 3'-phosphoadenylyl sulfate = chondroitin 4'-sulfate + n adenosine 3',5'-bisphosphate + n H(+). Catalyzes the transfer of sulfate to position 4 of the N-acetylgalactosamine (GalNAc) residue of chondroitin. Chondroitin sulfate constitutes the predominant proteoglycan present in cartilage and is distributed on the surfaces of many cells and extracellular matrices. Can also sulfate Gal residues in desulfated dermatan sulfate. Preferentially sulfates in GlcA-&gt;GalNAc unit than in IdoA-&gt;GalNAc unit. Does not form 4, 6-di-O-sulfated GalNAc when chondroitin sulfate C is used as an acceptor. The polypeptide is Carbohydrate sulfotransferase 11 (Chst11) (Mus musculus (Mouse)).